We begin with the raw amino-acid sequence, 601 residues long: NADH-quinone oxidoreductase subunit C/D (601 aa).

An NADH dehydrogenase I subunit C region spans residues 1 to 191 (MKLTRDFPSN…DPFMLDAAKQ (191 aa)). The NADH dehydrogenase I subunit D stretch occupies residues 215-601 (DYMFLNLGPN…IDFVMSDVDR (387 aa)).

In the N-terminal section; belongs to the complex I 30 kDa subunit family. The protein in the C-terminal section; belongs to the complex I 49 kDa subunit family. As to quaternary structure, NDH-1 is composed of 13 different subunits. Subunits NuoB, CD, E, F, and G constitute the peripheral sector of the complex.

The protein localises to the cell inner membrane. The enzyme catalyses a quinone + NADH + 5 H(+)(in) = a quinol + NAD(+) + 4 H(+)(out). Its function is as follows. NDH-1 shuttles electrons from NADH, via FMN and iron-sulfur (Fe-S) centers, to quinones in the respiratory chain. The immediate electron acceptor for the enzyme in this species is believed to be ubiquinone. Couples the redox reaction to proton translocation (for every two electrons transferred, four hydrogen ions are translocated across the cytoplasmic membrane), and thus conserves the redox energy in a proton gradient. This Aeromonas salmonicida (strain A449) protein is NADH-quinone oxidoreductase subunit C/D.